Consider the following 544-residue polypeptide: CTP synthase (544 aa).

The tract at residues 1 to 266 (MATNYIFVTG…DDFVCDRFRL (266 aa)) is amidoligase domain. Ser14 contributes to the CTP binding site. Ser14 is a binding site for UTP. Residues 15 to 20 (SLGKGI) and Asp72 each bind ATP. Asp72 and Glu140 together coordinate Mg(2+). Residues 147–149 (DIE), 187–192 (KTKPTQ), and Lys223 contribute to the CTP site. UTP-binding positions include 187–192 (KTKPTQ) and Lys223. Position 239–241 (239–241 (KDV)) interacts with ATP. Residues 291-542 (TIGMVGKYVE…VKAAKEHQGK (252 aa)) enclose the Glutamine amidotransferase type-1 domain. Residue Gly352 participates in L-glutamine binding. Cys379 functions as the Nucleophile; for glutamine hydrolysis in the catalytic mechanism. L-glutamine-binding positions include 380–383 (LGMQ), Glu403, and Arg470. Active-site residues include His515 and Glu517.

Belongs to the CTP synthase family. Homotetramer.

The catalysed reaction is UTP + L-glutamine + ATP + H2O = CTP + L-glutamate + ADP + phosphate + 2 H(+). It carries out the reaction L-glutamine + H2O = L-glutamate + NH4(+). The enzyme catalyses UTP + NH4(+) + ATP = CTP + ADP + phosphate + 2 H(+). It functions in the pathway pyrimidine metabolism; CTP biosynthesis via de novo pathway; CTP from UDP: step 2/2. With respect to regulation, allosterically activated by GTP, when glutamine is the substrate; GTP has no effect on the reaction when ammonia is the substrate. The allosteric effector GTP functions by stabilizing the protein conformation that binds the tetrahedral intermediate(s) formed during glutamine hydrolysis. Inhibited by the product CTP, via allosteric rather than competitive inhibition. Its function is as follows. Catalyzes the ATP-dependent amination of UTP to CTP with either L-glutamine or ammonia as the source of nitrogen. Regulates intracellular CTP levels through interactions with the four ribonucleotide triphosphates. The sequence is that of CTP synthase from Glaesserella parasuis serovar 5 (strain SH0165) (Haemophilus parasuis).